The following is a 413-amino-acid chain: MLSMPSFERKQNIFANKDALGESYQPNKIEERDDEIEKYMDALQPVIDGWEPNNIFVYGNTGVGKTAVTDHLLDQLQTDVEAYDDVTLSVIYLNCKTLSSSYQVAVELVNKLRRPGAEISSTGYPQQSVFKKLYQELEALGGTILIVLDEVDAIGDRDDLLYELPRARSQGNLEDAKVGIIGISNDYKFQEQLDPRVQDTLCERELQFPPYDALELANILDSRTDIAIADDSLAEGVTQHCAALAARDSGSARQALDLLRLAGELAENQDADAISTDHVEAARSELERERVEEGMRELTTHGRLTLLAVVSKAAKADTPSRTRAIYDEYASLCKSAANTDDPLKQRSVHNHLSDLHMLGILSKYENRSGSRGNYYSYELDVPFESAVDAMADVLMLDAEIEKMEGLASRNGVL.

ATP is bound by residues 63–67 (VGKTA), tyrosine 211, and arginine 223.

This sequence belongs to the CDC6/cdc18 family.

In terms of biological role, involved in regulation of DNA replication. This is ORC1-type DNA replication protein 10 (orc10) from Halobacterium salinarum (strain ATCC 700922 / JCM 11081 / NRC-1) (Halobacterium halobium).